We begin with the raw amino-acid sequence, 618 residues long: Tyrosine-protein kinase ZAP-70 (618 aa).

Residues 10 to 102 (FFYGSISRAE…GLPCNLRKPC (93 aa)) enclose the SH2 1 domain. An interdomain A region spans residues 103–162 (NRPPGLEPQPGVFDCLRDAMVRDYVRQTWKLEGDALEQAIISQAPQVEKLIATTAHERMP). Residues 163–254 (WYHSSLTREE…GLIYRLKEVC (92 aa)) form the SH2 2 domain. Residue Tyr248 is modified to Phosphotyrosine. The tract at residues 255–336 (PNSSASAAVA…KKLFLKRENL (82 aa)) is interdomain B. The segment at 270–320 (AHPSTFTQPQRRVDTLNSDGYTPEPARLASSTDKPRPMPMDTSVYESPYSD) is disordered. Residues 273 to 289 (STFTQPQRRVDTLNSDG) show a composition bias toward polar residues. Ser287 carries the post-translational modification Phosphoserine. Tyr290 is subject to Phosphotyrosine. Tyr314 bears the Phosphotyrosine; by LCK mark. Position 318 is a phosphotyrosine (Tyr318). A Protein kinase domain is found at 337-597 (LVADIELGCG…VEQRMRNYYY (261 aa)). ATP-binding positions include 343 to 351 (LGCGNFGSV) and Lys368. Residue Asp460 is the Proton acceptor of the active site. A phosphotyrosine mark is found at Tyr491 and Tyr492. Residue Lys543 forms a Glycyl lysine isopeptide (Lys-Gly) (interchain with G-Cter in ubiquitin) linkage.

This sequence belongs to the protein kinase superfamily. Tyr protein kinase family. SYK/ZAP-70 subfamily. In terms of assembly, interacts with CD247/CD3Z; this interaction docks ZAP70 at the stimulated TCR. Interacts with NFAM1. Interacts with adapter protein SLA; this interaction negatively regulates T-cell receptor signaling. Interacts with VAV1. Interacts with CBL; this interaction promotes ubiquitination, internalization and subsequent degradation of CD247/CD3Z. Identified in a complex with CBL and UBE2L3. Interacts with SHB. Interacts with adapter protein SLA2; this interaction negatively regulates T-cell receptor signaling. Interacts with CBLB. Interacts (via SH2 domains) with RHOH; this interaction regulates ZAP70 subcellular localization. Interacts with DEF6. Interacts (ubiquitinated form) with OTUD7B and UBASH3B. Post-translationally, phosphorylated on tyrosine residues upon T-cell antigen receptor (TCR) stimulation. Phosphorylation of Tyr-314 and Tyr-314 are essential for ZAP70 positive function on T-lymphocyte activation whereas Tyr-290 has a negative regulatory role. Within the C-terminal kinase domain, Tyr-491 and Tyr-492 are phosphorylated after TCR induction, Tyr-491 playing a negative regulatory role and Tyr-492 a positive. Tyr-492 is dephosphorylated by PTN22. In terms of processing, ubiquitinated in response to T cell activation. Deubiquitinated by OTUD7B. In terms of tissue distribution, isoform 1 and isoform 2 are expressed in thymus, spleen and lymph nodes.

The protein resides in the cytoplasm. It localises to the cell membrane. The catalysed reaction is L-tyrosyl-[protein] + ATP = O-phospho-L-tyrosyl-[protein] + ADP + H(+). Activated by phosphorylation at Tyr-492 in the activation loop. Its function is as follows. Tyrosine kinase that plays an essential role in regulation of the adaptive immune response. Regulates motility, adhesion and cytokine expression of mature T-cells, as well as thymocyte development. Also contributes to the development and activation of primary B-lymphocytes. When antigen presenting cells (APC) activate T-cell receptor (TCR), a serie of phosphorylations lead to the recruitment of ZAP70 to the doubly phosphorylated TCR component CD3Z through ITAM motif at the plasma membrane. This recruitment serves to localization to the stimulated TCR and to relieve its autoinhibited conformation. Release of ZAP70 active conformation is further stabilized by phosphorylation mediated by LCK. Subsequently, ZAP70 phosphorylates at least 2 essential adapter proteins: LAT and LCP2. In turn, a large number of signaling molecules are recruited and ultimately lead to lymphokine production, T-cell proliferation and differentiation. Furthermore, ZAP70 controls cytoskeleton modifications, adhesion and mobility of T-lymphocytes, thus ensuring correct delivery of effectors to the APC. ZAP70 is also required for TCR-CD3Z internalization and degradation through interaction with the E3 ubiquitin-protein ligase CBL and adapter proteins SLA and SLA2. Thus, ZAP70 regulates both T-cell activation switch on and switch off by modulating TCR expression at the T-cell surface. During thymocyte development, ZAP70 promotes survival and cell-cycle progression of developing thymocytes before positive selection (when cells are still CD4/CD8 double negative). Additionally, ZAP70-dependent signaling pathway may also contribute to primary B-cells formation and activation through B-cell receptor (BCR). This chain is Tyrosine-protein kinase ZAP-70 (Zap70), found in Mus musculus (Mouse).